Consider the following 548-residue polypeptide: Phenylalanine--tRNA ligase beta subunit (548 aa).

The 76-residue stretch at 275-350 (LKEDVLETTS…IAYGYNKFSG (76 aa)) folds into the B5 domain. The Mg(2+) site is built by Asp-328, Asp-334, Glu-337, and Glu-338.

It belongs to the phenylalanyl-tRNA synthetase beta subunit family. Type 2 subfamily. As to quaternary structure, tetramer of two alpha and two beta subunits. Requires Mg(2+) as cofactor.

It is found in the cytoplasm. It carries out the reaction tRNA(Phe) + L-phenylalanine + ATP = L-phenylalanyl-tRNA(Phe) + AMP + diphosphate + H(+). This is Phenylalanine--tRNA ligase beta subunit from Methanocaldococcus jannaschii (strain ATCC 43067 / DSM 2661 / JAL-1 / JCM 10045 / NBRC 100440) (Methanococcus jannaschii).